The chain runs to 286 residues: Glycine--tRNA ligase alpha subunit (286 aa).

This sequence belongs to the class-II aminoacyl-tRNA synthetase family. As to quaternary structure, tetramer of two alpha and two beta subunits.

Its subcellular location is the cytoplasm. The enzyme catalyses tRNA(Gly) + glycine + ATP = glycyl-tRNA(Gly) + AMP + diphosphate. The chain is Glycine--tRNA ligase alpha subunit from Thermotoga sp. (strain RQ2).